Reading from the N-terminus, the 262-residue chain is MASPSLLQSSASSFHGRFSPLAAPSSARMLSPPLRNVVKVSASGTVLVEKSEAEKTQRLKTAYLERIIPALKEEFKYVNIHQVPKVQKIVVNCGIGDAAQNDKGLEAAMKDIALITGQKPIKTRARASIATFKIREDQPLGIAVTLRGDVMYSFLDRLINLALPRTRDFQGVSPSSFDGNGNYSIGVKDQGVFPEIRFDAVGKTRGMDVCISTTAKSDQEGQKLLALMGMPFREGGGGSTGAIVRKKKLKSHHFDAKGKGKR.

The transit peptide at methionine 1–lysine 39 directs the protein to the chloroplast.

The protein belongs to the universal ribosomal protein uL5 family. Part of the 50S ribosomal subunit; contacts the 5S rRNA.

It is found in the plastid. Its subcellular location is the chloroplast. Its function is as follows. Binds 5S rRNA, forms part of the central protuberance of the 50S subunit. The polypeptide is Large ribosomal subunit protein uL5c (RPL5) (Arabidopsis thaliana (Mouse-ear cress)).